Here is a 477-residue protein sequence, read N- to C-terminus: Cytochrome P450 716A1 (477 aa).

A helical transmembrane segment spans residues 2–22 (YMAIMIILFLSSILLSLLLLL). Position 424 (Cys-424) interacts with heme.

The protein belongs to the cytochrome P450 family. Heme serves as cofactor.

The protein localises to the membrane. Possesses triterpene oxidizing activity. Catalyzes the C28 hydroxylation of alpha-amyrin, beta-amyrin, and lupeol, producing uvaol, erythrodiol, and betulin, respectively. Catalyzes the C28 carboxylation of alpha- and beta-amyrin. The polypeptide is Cytochrome P450 716A1 (Arabidopsis thaliana (Mouse-ear cress)).